Consider the following 90-residue polypeptide: MIILHLIHRSLNMLINTSNNLLITTIHLLSSIGAINWGLVGLFNFNLVTLLFGSFPIIVTIFYIIIGFCGVYSFLYLGKIFCKPGIKNVK.

Transmembrane regions (helical) follow at residues 23–43 (ITTI…VGLF) and 48–68 (VTLL…IIGF).

The protein resides in the cell membrane. This is an uncharacterized protein from Rickettsia prowazekii (strain Madrid E).